The sequence spans 290 residues: Short chain dehydrogenase/reductase nsrO (290 aa).

2 residues coordinate NADP(+): Ile-37 and Lys-149. Active-site proton donor residues include Ser-168 and Tyr-182. The NADP(+) site is built by Tyr-182, Lys-186, and Thr-221. The Lowers pKa of active site Tyr role is filled by Lys-186.

It belongs to the short-chain dehydrogenases/reductases (SDR) family.

It participates in secondary metabolite biosynthesis. Its function is as follows. Short chain dehydrogenase/reductase; part of the gene cluster that mediates the biosynthesis of the tetrahydroxanthone dimer neosartorin, which exhibits antibacterial activity. The two different monomeric units appear to be synthesized by the same set of enzymes, among which the Baeyer-Villiger monooxygenase nsrF is the key enzyme for the divergence of the biosynthetic routes. The pathway begins with the synthesis of atrochrysone thioester by the polyketide synthase nsrB. The atrochrysone carboxyl ACP thioesterase nsrC then breaks the thioester bond and releases the atrochrysone carboxylic acid from AacuL. Atrochrysone carboxylic acid is decarboxylated by the decarboxylase nsrE, and oxidized by the anthrone oxygenase nsrD to yield emodin. Emodin is then reduced to emodin hydroquinone by the oxidoreductase nsrR. A-ring reduction by the short chain dehydrogenase nsrJ, dehydration by the scytalone dehydratase-like protein nsrI and probable spontaneous re-oxidation, results in overall deoxygenation to chrysophanol. The Baeyer-Villiger monooxygenase nsrF accepts chrysophanol as a substrate to insert one oxygen atom at two different positions to yield the precursors of both monomric units. NsrF is promiscuous/flexible in interacting with the 2 (non methylated and methylated) aromatic rings of chrysophanol, thus diverging the biosynthetic pathway at this point. After the hydrolysis of the lactones, methylesterification by the methyltransferase nsrG yields respectively moniliphenone and 2,2',6'-trihydroxy-4-methyl-6-methoxya-cyldiphenylmethanone. The next steps are the hydroxylation by the FAD-dependent monooxygenase nsrK, followed by isomerization by the monooxygenase nsrQ. The short chain dehydrogenase/reductase nsrO then catalyzes the C-5 ketoreduction to give the xanthone skeleton of blennolide C and 5-acetylblennolide A. The acetyltransferase nsrL has a strict substrate specificity and uses only blennolide A but not blennolide C to yield 5-acetylblennolide A as the single-acetylated product. In the final step of the biosynthesis, the heterodimerization of the 2 xanthones, blennolide C and 5-acetylblennolide A, is catalyzed by the cytochrome P450 monooxygenase nsrP. NsrP can utilize at least three different xanthones as its substrates to perform the dimerization reaction. The polypeptide is Short chain dehydrogenase/reductase nsrO (Aspergillus novofumigatus (strain IBT 16806)).